Here is a 344-residue protein sequence, read N- to C-terminus: UDP-N-acetylglucosamine transporter UGNT1 (344 aa).

Residues 1–23 form a disordered region; that stretch reads MRNNPVLPVSDPPLAGENDSDGK. The next 9 membrane-spanning stretches (helical) occupy residues 41-61, 66-86, 92-112, 114-134, 167-187, 194-214, 226-246, 264-284, and 304-324; these read YAAL…KAAL, FPCV…FLYA, IISF…FVPV, TLFH…ASMA, YTRS…FAGA, FYGY…LATI, FGLM…WTFI, FMVV…CIFL, and FTVG…MNVI.

Belongs to the TPT transporter family. UGnT (TC 2.A.7.15) subfamily. As to expression, expressed in roots, leaves, stems, flowers and siliques.

The protein localises to the golgi apparatus membrane. Functionally, mediates the transport of UDP-N-acetylglucosamine (UDP-GlcNAc) across the Golgi apparatus membrane. Delivers an essential substrate for the maturation of N-glycans and the GlcNAc-containing glycosyl inositol phosphorylceramide (GIPC) class of sphingolipids in the Golgi apparatus. The polypeptide is UDP-N-acetylglucosamine transporter UGNT1 (Arabidopsis thaliana (Mouse-ear cress)).